The chain runs to 539 residues: Chaperone Ric-8A (539 aa).

Residues 507–539 are disordered; sequence MGITPSGNLAPMENAIRDMADERSSSDSDLGLD. The span at 521 to 532 shows a compositional bias: basic and acidic residues; the sequence is AIRDMADERSSS.

Belongs to the synembryn family.

It is found in the cytoplasm. The protein resides in the cell cortex. Functionally, chaperone that specifically binds and folds nascent G alpha proteins prior to G protein heterotrimer formation, promoting their stability and activity: folds GNAI1, GNAO1, GNA13 and GNAQ. Does not fold G(s) G-alpha proteins GNAS nor GNAL. Also acts as a guanine nucleotide exchange factor (GEF) for G alpha proteins by stimulating exchange of bound GDP for free GTP. The polypeptide is Chaperone Ric-8A (RIC8A) (Gallus gallus (Chicken)).